A 123-amino-acid polypeptide reads, in one-letter code: KxDL motif-containing protein LO9-177 (123 aa).

Positions 78–81 (KDDL) match the KxDL motif.

This sequence belongs to the KXD1 family. As to quaternary structure, homodimer. Component of a nuclear cell elongation controlling complex made of ILI5/BUL1, LO9-177 and BC1. Binds directly to ILI5/BUL1, ILI4/BU1, BUL2 and BUL3. Binds to BC1 in the nucleus. Interacts with BCL1.

It localises to the nucleus. The protein localises to the cytoplasm. Its function is as follows. Contributes, together with ILI5/BUL1 and BC1, to the promotion of leaf inclination and grain size by modulating cell elongation. In Oryza sativa subsp. indica (Rice), this protein is KxDL motif-containing protein LO9-177.